Here is a 160-residue protein sequence, read N- to C-terminus: CXXC motif containing zinc binding protein (160 aa).

Residues Cys33, Cys36, Cys67, and Cys70 each coordinate Zn(2+).

The protein belongs to the UPF0587 family.

This chain is CXXC motif containing zinc binding protein (czib), found in Xenopus laevis (African clawed frog).